A 217-amino-acid chain; its full sequence is Octanoyltransferase (217 aa).

The region spanning 33-208 is the BPL/LPL catalytic domain; it reads SSSQDEIWLV…KLCSLLGIAS (176 aa). Substrate contacts are provided by residues 72–79, 139–141, and 152–154; these read RGGQVTYH, SIG, and GLA. Cys170 serves as the catalytic Acyl-thioester intermediate.

This sequence belongs to the LipB family.

It is found in the cytoplasm. It catalyses the reaction octanoyl-[ACP] + L-lysyl-[protein] = N(6)-octanoyl-L-lysyl-[protein] + holo-[ACP] + H(+). It participates in protein modification; protein lipoylation via endogenous pathway; protein N(6)-(lipoyl)lysine from octanoyl-[acyl-carrier-protein]: step 1/2. Functionally, catalyzes the transfer of endogenously produced octanoic acid from octanoyl-acyl-carrier-protein onto the lipoyl domains of lipoate-dependent enzymes. Lipoyl-ACP can also act as a substrate although octanoyl-ACP is likely to be the physiological substrate. The sequence is that of Octanoyltransferase from Pseudoalteromonas atlantica (strain T6c / ATCC BAA-1087).